The chain runs to 510 residues: 2,3-bisphosphoglycerate-independent phosphoglycerate mutase (510 aa).

Residues D14 and S64 each contribute to the Mn(2+) site. The active-site Phosphoserine intermediate is the S64. Substrate is bound by residues H125, 155 to 156, R187, R193, 259 to 262, and K332; these read RD and RADR. Mn(2+) is bound by residues D399, H403, D440, H441, and H459.

It belongs to the BPG-independent phosphoglycerate mutase family. In terms of assembly, monomer. The cofactor is Mn(2+).

It carries out the reaction (2R)-2-phosphoglycerate = (2R)-3-phosphoglycerate. It functions in the pathway carbohydrate degradation; glycolysis; pyruvate from D-glyceraldehyde 3-phosphate: step 3/5. In terms of biological role, catalyzes the interconversion of 2-phosphoglycerate and 3-phosphoglycerate. The chain is 2,3-bisphosphoglycerate-independent phosphoglycerate mutase from Ectopseudomonas mendocina (strain ymp) (Pseudomonas mendocina).